Consider the following 1027-residue polypeptide: Multidrug resistance protein MdtC (1027 aa).

12 helical membrane-spanning segments follow: residues 16–36, 333–353, 360–380, 387–407, 431–451, 463–483, 528–548, 853–873, 875–895, 897–917, 953–973, and 984–1004; these read LLSL…PVAP, EVER…FLFL, LIPA…MYLC, LSLM…IVVL, VGFT…PLLL, FAIT…TLTP, WIMA…ISAP, LILI…LYES, IHPL…LLAL, LFDT…IGIV, PIIM…LSSG, and ITIV…TPII.

The protein belongs to the resistance-nodulation-cell division (RND) (TC 2.A.6) family. MdtC subfamily. Part of a tripartite efflux system composed of MdtA, MdtB and MdtC. MdtC forms a heteromultimer with MdtB.

It localises to the cell inner membrane. In Proteus mirabilis (strain HI4320), this protein is Multidrug resistance protein MdtC.